Here is a 327-residue protein sequence, read N- to C-terminus: Probable cell division protein WhiA (327 aa).

Positions 275 to 308 form a DNA-binding region, H-T-H motif; sequence SLEELGRLADPPMTKDAVAGRIRRLLSMADRKAK.

Belongs to the WhiA family.

Involved in cell division and chromosome segregation. This Mycobacterium bovis (strain ATCC BAA-935 / AF2122/97) protein is Probable cell division protein WhiA.